Consider the following 464-residue polypeptide: Type I restriction enzyme EcoKI specificity subunit (464 aa).

This sequence belongs to the type-I restriction system S methylase family. In terms of assembly, the type I restriction/modification system is composed of three polypeptides R, M and S. The restriction enzyme has stoichiometry R(2)M(2)S(1). The methyltransferase is composed of M(2)S(1). As to quaternary structure, (Microbial infection) Interacts with Escherichia phage T7 protein Ocr; this interaction leads to the inhibition of the methyltransferase restriction enzyme M.EcoKI composed of M(2)S(1).

The specificity (S) subunit of a type I restriction enzyme; this subunit dictates DNA sequence specificity. The M and S subunits together form a methyltransferase (MTase) that methylates A-2 on the top and A-3 on the bottom strand of the sequence 5'-AACN(6)GTGC-3'. In the presence of the R subunit the complex can also act as an endonuclease, binding to the same target sequence but cutting the DNA some distance from this site. Whether the DNA is cut or modified depends on the methylation state of the target sequence. When the target site is unmodified, the DNA is cut. When the target site is hemimethylated, the complex acts as a maintenance MTase modifying the DNA so that both strands become methylated. After locating a non-methylated recognition site, the enzyme complex serves as a molecular motor that translocates DNA in an ATP-dependent manner until a collision occurs that triggers cleavage. The chain is Type I restriction enzyme EcoKI specificity subunit from Escherichia coli (strain K12).